A 36-amino-acid polypeptide reads, in one-letter code: Toxin Iob1 (36 aa).

3 disulfide bridges follow: Cys6-Cys21, Cys13-Cys26, and Cys20-Cys33.

It localises to the secreted. Its function is as follows. Binds reversibly and blocks N-type voltage-gated calcium channels (Cav). This is Toxin Iob1 from Isyndus obscurus (Assassin bug).